The primary structure comprises 356 residues: Zinc finger protein 830 (356 aa).

Residues 11–33 (AQEELRKLMKAKQRESSSKKRIE) adopt a coiled-coil conformation. The C2H2-type zinc-finger motif lies at 47–69 (CVVCNSLIKSELLWPAHILGKQH). The tract at residues 71–195 (EKVAELKGTK…PTSSADNLPA (125 aa)) is disordered. The span at 80–90 (KATTSSPSNTI) shows a compositional bias: polar residues. 2 stretches are compositionally biased toward basic and acidic residues: residues 99-118 (KGSE…EDHP) and 125-135 (LPEEFFEKEKT). The segment covering 150–165 (DYEDVDDDDAEEGEEY) has biased composition (acidic residues). The stretch at 278–322 (AEEDEEGRLDRQIDEIDEQIQCYRRVEHLRDRKDTLQDAKMEVLK) forms a coiled coil.

The protein localises to the nucleus. It is found in the chromosome. It localises to the nucleus speckle. Its function is as follows. May act as an important regulator of the cell cycle that participates in the maintenance of genome integrity. The polypeptide is Zinc finger protein 830 (Xenopus laevis (African clawed frog)).